The sequence spans 197 residues: Allatostatins (197 aa).

The signal sequence occupies residues 1–27; it reads MRSRTSVLTSSLAFLYFFGIVGRSALA. Residues 28-56 constitute a propeptide that is removed on maturation; that stretch reads MEETPASSMNLQHYNNMLNPMVFDDTMPE. Ile-76 is subject to Isoleucine amide. The propeptide occupies 80–86; it reads WIDTNDN. Leucine amide is present on residues Leu-96, Leu-106, Leu-154, and Leu-184. The interval 161-197 is disordered; the sequence is YSGGQPLGSKRPNDMLSQRYHFGLGKRMSEDEEESSQ. Positions 188–197 are excised as a propeptide; that stretch reads MSEDEEESSQ.

It belongs to the allatostatin family.

The protein resides in the secreted. Functionally, neuropeptides. The sequence is that of Allatostatins from Apis mellifera (Honeybee).